The following is a 213-amino-acid chain: Kynurenine formamidase (213 aa).

Trp18 lines the substrate pocket. 3 residues coordinate Zn(2+): His48, His52, and Asp54. The Proton donor/acceptor role is filled by His58. 2 residues coordinate Zn(2+): His160 and Glu172.

The protein belongs to the Cyclase 1 superfamily. KynB family. Homodimer. Zn(2+) serves as cofactor.

It carries out the reaction N-formyl-L-kynurenine + H2O = L-kynurenine + formate + H(+). Its pathway is amino-acid degradation; L-tryptophan degradation via kynurenine pathway; L-kynurenine from L-tryptophan: step 2/2. Catalyzes the hydrolysis of N-formyl-L-kynurenine to L-kynurenine, the second step in the kynurenine pathway of tryptophan degradation. This Burkholderia cenocepacia (strain ATCC BAA-245 / DSM 16553 / LMG 16656 / NCTC 13227 / J2315 / CF5610) (Burkholderia cepacia (strain J2315)) protein is Kynurenine formamidase.